Here is a 51-residue protein sequence, read N- to C-terminus: Cyclic phosphodiesterase (51 aa).

His11 functions as the Proton donor/acceptor in the catalytic mechanism. Residue Thr13 coordinates substrate. Catalysis depends on His38, which acts as the Proton donor/acceptor. Substrate contacts are provided by Ser40 and Tyr43.

Belongs to the 2H phosphoesterase superfamily. CPD1 family.

Its function is as follows. Hydrolyzes ADP-ribose 1'',2''-cyclic phosphate (Appr&gt;1) that is produced during tRNA splicing into ADP-ribose 1''-phosphate (Appr-1''p). The protein is Cyclic phosphodiesterase of Triticum aestivum (Wheat).